The chain runs to 31 residues: Cytochrome b6-f complex subunit 6 (31 aa).

A helical membrane pass occupies residues 4-24 (ITSYFGFLLAALTITPALFIG).

The protein belongs to the PetL family. In terms of assembly, the 4 large subunits of the cytochrome b6-f complex are cytochrome b6, subunit IV (17 kDa polypeptide, PetD), cytochrome f and the Rieske protein, while the 4 small subunits are PetG, PetL, PetM and PetN. The complex functions as a dimer.

It is found in the plastid. Its subcellular location is the chloroplast thylakoid membrane. Functionally, component of the cytochrome b6-f complex, which mediates electron transfer between photosystem II (PSII) and photosystem I (PSI), cyclic electron flow around PSI, and state transitions. PetL is important for photoautotrophic growth as well as for electron transfer efficiency and stability of the cytochrome b6-f complex. This Saccharum barberi (Indian sugarcane) protein is Cytochrome b6-f complex subunit 6.